Consider the following 930-residue polypeptide: Nonribosomal peptide synthetase btyA (930 aa).

An adenylation (A) domain region spans residues 31–440 (ESPHRLTYAE…RGRSKELICI (410 aa)). The 78-residue stretch at 570-647 (PAGNETETLL…VLARQLQDGH (78 aa)) folds into the Carrier domain. O-(pantetheine 4'-phosphoryl)serine is present on Ser607. Residues 667 to 920 (PLWLIHPIGG…EDNVHKVYRV (254 aa)) are thioesterase (TE) domain.

It belongs to the NRP synthetase family.

The enzyme catalyses 2 3-(4-hydroxyphenyl)pyruvate + H(+) = (2S)-2-(4-hydoxybenzyl)-3-(4-hydroxyphenyl)-2-furonol carboxylate + H2O. The protein operates within secondary metabolite biosynthesis. Nonribosomal peptide synthetase; part of the gene cluster that mediates the biosynthesis of butyrolactones, natural products that show a wide range of biological activities such as antitumor, antiparasitic or anti-inflammatory activity. The nonribosomal peptide synthetase btyA is responsible for the production of butyrolactone II, the core structure of butyrolactones. BtyA first activates 4-hydroxyphenylpyruvate (HPPA) through its A domain to AMP-HPPA. The HPPA unit is then loaded to the T domain and eventually transferred to the TE domain. Upon loading of another HPPA unit to the T domain, the TE domain promotes the enolate formation on the unit attached. Then aldol condensation establishes the carbon-carbon bond between the two units, followed by ester cyclization, and keto-enol tautomerization to yield the gamma-butyrolactone core. Hydrolysis, and finally esterification of the exposed carboxylic acid group yields butyrolactone II. Two additional enzymes, a prenyltransferase and an epoxidase, may be involved in the tailoring modifications of butyrolactone II to give butyrolactone III and butyrolactone I. The chain is Nonribosomal peptide synthetase btyA from Aspergillus terreus (strain NIH 2624 / FGSC A1156).